A 308-amino-acid chain; its full sequence is Aspartate carbamoyltransferase catalytic subunit (308 aa).

Arginine 57 and threonine 58 together coordinate carbamoyl phosphate. Lysine 86 serves as a coordination point for L-aspartate. Residues arginine 107, histidine 135, and glutamine 138 each coordinate carbamoyl phosphate. Arginine 167 and arginine 228 together coordinate L-aspartate. Carbamoyl phosphate contacts are provided by leucine 267 and proline 268.

This sequence belongs to the aspartate/ornithine carbamoyltransferase superfamily. ATCase family. In terms of assembly, heterooligomer of catalytic and regulatory chains.

The catalysed reaction is carbamoyl phosphate + L-aspartate = N-carbamoyl-L-aspartate + phosphate + H(+). It participates in pyrimidine metabolism; UMP biosynthesis via de novo pathway; (S)-dihydroorotate from bicarbonate: step 2/3. Catalyzes the condensation of carbamoyl phosphate and aspartate to form carbamoyl aspartate and inorganic phosphate, the committed step in the de novo pyrimidine nucleotide biosynthesis pathway. This is Aspartate carbamoyltransferase catalytic subunit from Methanococcoides burtonii (strain DSM 6242 / NBRC 107633 / OCM 468 / ACE-M).